The chain runs to 70 residues: Large ribosomal subunit protein uL29 (70 aa).

This sequence belongs to the universal ribosomal protein uL29 family.

The chain is Large ribosomal subunit protein uL29 from Clostridium botulinum (strain ATCC 19397 / Type A).